Reading from the N-terminus, the 233-residue chain is 2,3,4,5-tetrahydropyridine-2,6-dicarboxylate N-acetyltransferase (233 aa).

It belongs to the transferase hexapeptide repeat family. DapH subfamily.

It carries out the reaction (S)-2,3,4,5-tetrahydrodipicolinate + acetyl-CoA + H2O = L-2-acetamido-6-oxoheptanedioate + CoA. Its pathway is amino-acid biosynthesis; L-lysine biosynthesis via DAP pathway; LL-2,6-diaminopimelate from (S)-tetrahydrodipicolinate (acetylase route): step 1/3. Functionally, catalyzes the transfer of an acetyl group from acetyl-CoA to tetrahydrodipicolinate. This chain is 2,3,4,5-tetrahydropyridine-2,6-dicarboxylate N-acetyltransferase, found in Thermotoga petrophila (strain ATCC BAA-488 / DSM 13995 / JCM 10881 / RKU-1).